A 170-amino-acid polypeptide reads, in one-letter code: Protein-export protein SecB (170 aa).

The protein belongs to the SecB family. Homotetramer, a dimer of dimers. One homotetramer interacts with 1 SecA dimer.

The protein localises to the cytoplasm. Its function is as follows. One of the proteins required for the normal export of preproteins out of the cell cytoplasm. It is a molecular chaperone that binds to a subset of precursor proteins, maintaining them in a translocation-competent state. It also specifically binds to its receptor SecA. In Pasteurella multocida (strain Pm70), this protein is Protein-export protein SecB.